A 109-amino-acid chain; its full sequence is Nucleoid-associated protein PC1_1077 (109 aa).

The protein belongs to the YbaB/EbfC family. Homodimer.

Its subcellular location is the cytoplasm. The protein localises to the nucleoid. Binds to DNA and alters its conformation. May be involved in regulation of gene expression, nucleoid organization and DNA protection. The chain is Nucleoid-associated protein PC1_1077 from Pectobacterium carotovorum subsp. carotovorum (strain PC1).